The sequence spans 291 residues: Acetylglutamate kinase (291 aa).

Substrate contacts are provided by residues 65 to 66, arginine 87, and asparagine 186; that span reads GG.

This sequence belongs to the acetylglutamate kinase family. ArgB subfamily.

It localises to the cytoplasm. The enzyme catalyses N-acetyl-L-glutamate + ATP = N-acetyl-L-glutamyl 5-phosphate + ADP. It functions in the pathway amino-acid biosynthesis; L-arginine biosynthesis; N(2)-acetyl-L-ornithine from L-glutamate: step 2/4. Catalyzes the ATP-dependent phosphorylation of N-acetyl-L-glutamate. The sequence is that of Acetylglutamate kinase from Mycolicibacterium vanbaalenii (strain DSM 7251 / JCM 13017 / BCRC 16820 / KCTC 9966 / NRRL B-24157 / PYR-1) (Mycobacterium vanbaalenii).